A 559-amino-acid polypeptide reads, in one-letter code: Membrane protein insertase YidC (559 aa).

A helical transmembrane segment spans residues 6 to 26 (TVLWMIFSFSLLLLWNNWQIH). Positions 34–80 (GGPSPEQNAPATANNQAATNPASNTPAVPNAPAATSAPSSVPGSTAP) are disordered. Residues 42–80 (APATANNQAATNPASNTPAVPNAPAATSAPSSVPGSTAP) are compositionally biased toward low complexity. 4 consecutive transmembrane segments (helical) span residues 367–387 (LLGNWGWTIVALTVIIKAVFY), 441–461 (LPMVVQIPVFIALYWVLLASV), 480–500 (PYFILPAVMMATMFLQIKLNP), and 510–530 (VMMVMPLVFGGMMFFFPAGLV).

The protein belongs to the OXA1/ALB3/YidC family. Type 1 subfamily. In terms of assembly, interacts with the Sec translocase complex via SecD. Specifically interacts with transmembrane segments of nascent integral membrane proteins during membrane integration.

Its subcellular location is the cell inner membrane. Required for the insertion and/or proper folding and/or complex formation of integral membrane proteins into the membrane. Involved in integration of membrane proteins that insert both dependently and independently of the Sec translocase complex, as well as at least some lipoproteins. Aids folding of multispanning membrane proteins. This chain is Membrane protein insertase YidC, found in Bordetella avium (strain 197N).